A 402-amino-acid polypeptide reads, in one-letter code: 1-deoxy-D-xylulose 5-phosphate reductoisomerase (402 aa).

7 residues coordinate NADPH: T21, G22, S23, I24, G47, N50, and N127. Residue K128 participates in 1-deoxy-D-xylulose 5-phosphate binding. E129 lines the NADPH pocket. Residue D151 participates in Mn(2+) binding. S152, E153, S177, and H200 together coordinate 1-deoxy-D-xylulose 5-phosphate. E153 lines the Mn(2+) pocket. NADPH is bound at residue G206. Residues S213, N218, K219, and E222 each coordinate 1-deoxy-D-xylulose 5-phosphate. E222 is a Mn(2+) binding site.

The protein belongs to the DXR family. It depends on Mg(2+) as a cofactor. Mn(2+) serves as cofactor.

It catalyses the reaction 2-C-methyl-D-erythritol 4-phosphate + NADP(+) = 1-deoxy-D-xylulose 5-phosphate + NADPH + H(+). Its pathway is isoprenoid biosynthesis; isopentenyl diphosphate biosynthesis via DXP pathway; isopentenyl diphosphate from 1-deoxy-D-xylulose 5-phosphate: step 1/6. In terms of biological role, catalyzes the NADPH-dependent rearrangement and reduction of 1-deoxy-D-xylulose-5-phosphate (DXP) to 2-C-methyl-D-erythritol 4-phosphate (MEP). The sequence is that of 1-deoxy-D-xylulose 5-phosphate reductoisomerase from Mycobacterium marinum (strain ATCC BAA-535 / M).